The chain runs to 406 residues: Olfactomedin-like protein 3 (406 aa).

Residues 1–21 (MGPSAPLLLLFFLSWTGPLQG) form the signal peptide. A coiled-coil region spans residues 25 to 101 (HLVEYMERRL…REVDYLETQN (77 aa)). One can recognise an Olfactomedin-like domain in the interval 134-401 (DCSYTVAQVR…QIVYKLEMKK (268 aa)). Cys135 and Cys328 form a disulfide bridge. Residues Asn177 and Asn248 are each glycosylated (N-linked (GlcNAc...) asparagine).

The protein belongs to the OLFML3 family.

The protein localises to the secreted. Functionally, secreted scaffold protein that plays an essential role in dorsoventral patterning during early development. Stabilizes axial formation by restricting chordin (CHRD) activity on the dorsal side. Acts by facilitating the association between the tolloid proteases and their substrate chordin (CHRD), leading to enhance chordin (CHRD) degradation. May have matrix-related function involved in placental and embryonic development, or play a similar role in other physiological processes. This Mus musculus (Mouse) protein is Olfactomedin-like protein 3 (Olfml3).